Reading from the N-terminus, the 691-residue chain is Alpha-1,4-glucan:maltose-1-phosphate maltosyltransferase (691 aa).

Residues lysine 280, glutamine 341, and aspartate 376 each contribute to the alpha-maltose 1-phosphate site. Aspartate 411 functions as the Nucleophile in the catalytic mechanism. Asparagine 412 lines the alpha-maltose 1-phosphate pocket. The Proton donor role is filled by glutamate 440. 550-551 (KY) contacts alpha-maltose 1-phosphate.

This sequence belongs to the glycosyl hydrolase 13 family. GlgE subfamily. In terms of assembly, homodimer.

It catalyses the reaction alpha-maltose 1-phosphate + [(1-&gt;4)-alpha-D-glucosyl](n) = [(1-&gt;4)-alpha-D-glucosyl](n+2) + phosphate. In terms of biological role, maltosyltransferase that uses maltose 1-phosphate (M1P) as the sugar donor to elongate linear or branched alpha-(1-&gt;4)-glucans. Is involved in a branched alpha-glucan biosynthetic pathway from trehalose, together with TreS, Mak and GlgB. The polypeptide is Alpha-1,4-glucan:maltose-1-phosphate maltosyltransferase (Arcanobacterium haemolyticum (strain ATCC 9345 / DSM 20595 / CCM 5947 / CCUG 17215 / LMG 16163 / NBRC 15585 / NCTC 8452 / 11018)).